A 323-amino-acid chain; its full sequence is Iron-sulfur cluster transfer protein NUBPL (323 aa).

ATP is bound at residue 65–72 (AKGGVGKS).

This sequence belongs to the Mrp/NBP35 ATP-binding proteins family. [4Fe-4S] cluster serves as cofactor.

It is found in the mitochondrion. Functionally, iron-sulfur cluster transfer protein involved in the assembly of the mitochondrial membrane respiratory chain NADH dehydrogenase (Complex I). May deliver one or more Fe-S clusters to complex I subunits. The polypeptide is Iron-sulfur cluster transfer protein NUBPL (nubpl) (Dictyostelium discoideum (Social amoeba)).